We begin with the raw amino-acid sequence, 429 residues long: Ribosomal RNA small subunit methyltransferase B (429 aa).

S-adenosyl-L-methionine contacts are provided by residues 254–260, aspartate 277, aspartate 303, and aspartate 322; that span reads CAAPGGK. Cysteine 375 functions as the Nucleophile in the catalytic mechanism.

It belongs to the class I-like SAM-binding methyltransferase superfamily. RsmB/NOP family.

It is found in the cytoplasm. It catalyses the reaction cytidine(967) in 16S rRNA + S-adenosyl-L-methionine = 5-methylcytidine(967) in 16S rRNA + S-adenosyl-L-homocysteine + H(+). Its function is as follows. Specifically methylates the cytosine at position 967 (m5C967) of 16S rRNA. This Shigella boydii serotype 4 (strain Sb227) protein is Ribosomal RNA small subunit methyltransferase B.